Here is a 195-residue protein sequence, read N- to C-terminus: MAAADTPSATLRHHDLCSRGIRLARKMRSDVTDLLDIYVERQGLDASISVAAVDGVPTAAVERWAEQTGTQRLLDNLAAYRAFRTLLAQMLEEQRELLGDTDAELGPALAAMLLQVSAFVYHLEELLELESRGAPAEEGSEPPAPPRLSLFEQKLRGLRVLRELAQWAVRSVRDLRQLSKHGPGSGAALGLPESQ.

The protein belongs to the CNTF family. As to expression, nervous system.

The protein resides in the cytoplasm. In terms of biological role, CNTF is a survival factor for various neuronal cell types. Seems to prevent the degeneration of motor axons after axotomy. The polypeptide is Ciliary neurotrophic factor (CNTF) (Gallus gallus (Chicken)).